The sequence spans 91 residues: Small ribosomal subunit protein uS19 (91 aa).

Belongs to the universal ribosomal protein uS19 family.

In terms of biological role, protein S19 forms a complex with S13 that binds strongly to the 16S ribosomal RNA. The polypeptide is Small ribosomal subunit protein uS19 (Desulfotalea psychrophila (strain LSv54 / DSM 12343)).